A 167-amino-acid chain; its full sequence is Glutathione peroxidase 1 (167 aa).

C41 is a catalytic residue.

It belongs to the glutathione peroxidase family.

It carries out the reaction 2 glutathione + H2O2 = glutathione disulfide + 2 H2O. Its function is as follows. May constitute a glutathione peroxidase-like protective system against oxidative stresses. The chain is Glutathione peroxidase 1 (GPXHA-1) from Helianthus annuus (Common sunflower).